Consider the following 327-residue polypeptide: Olfactory receptor 226 (327 aa).

Topologically, residues Met-1–Val-26 are extracellular. An N-linked (GlcNAc...) asparagine glycan is attached at Asn-5. Residues Leu-27–Ile-50 traverse the membrane as a helical segment. The Cytoplasmic segment spans residues Arg-51–Lys-58. Residues Pro-59 to Pro-80 form a helical membrane-spanning segment. Topologically, residues Lys-81 to Thr-104 are extracellular. Cys-102 and Cys-194 are joined by a disulfide. A helical transmembrane segment spans residues Gln-105 to Tyr-125. At Asp-126–Arg-144 the chain is on the cytoplasmic side. A helical membrane pass occupies residues Leu-145–Val-163. At Lys-164–Glu-201 the chain is on the extracellular side. The helical transmembrane segment at Leu-202–Met-224 threads the bilayer. At Ala-225–Lys-241 the chain is on the cytoplasmic side. Residues Ala-242–Ala-265 form a helical membrane-spanning segment. The Extracellular segment spans residues Arg-266 to Lys-277. Residues Leu-278–Leu-297 form a helical membrane-spanning segment. At Arg-298–Gly-327 the chain is on the cytoplasmic side.

It belongs to the G-protein coupled receptor 1 family. Olfactory epithelium.

Its subcellular location is the cell membrane. Its function is as follows. Odorant receptor. This is Olfactory receptor 226 (Olr226) from Rattus norvegicus (Rat).